A 92-amino-acid polypeptide reads, in one-letter code: Small ribosomal subunit protein uS19 (92 aa).

This sequence belongs to the universal ribosomal protein uS19 family.

Protein S19 forms a complex with S13 that binds strongly to the 16S ribosomal RNA. The polypeptide is Small ribosomal subunit protein uS19 (Polaromonas naphthalenivorans (strain CJ2)).